Consider the following 131-residue polypeptide: Sec-independent protein translocase protein TatB (131 aa).

Residues 2-22 (LGSLSWEHMLVLVVVGLVVLG) form a helical membrane-spanning segment. Residues 96 to 131 (AFDRPVNGAAAQPPPAPAPPPEPHRPGQTPFDADAT) form a disordered region. The span at 107 to 116 (QPPPAPAPPP) shows a compositional bias: pro residues.

It belongs to the TatB family. As to quaternary structure, the Tat system comprises two distinct complexes: a TatABC complex, containing multiple copies of TatA, TatB and TatC subunits, and a separate TatA complex, containing only TatA subunits. Substrates initially bind to the TatABC complex, which probably triggers association of the separate TatA complex to form the active translocon.

It is found in the cell membrane. Functionally, part of the twin-arginine translocation (Tat) system that transports large folded proteins containing a characteristic twin-arginine motif in their signal peptide across membranes. Together with TatC, TatB is part of a receptor directly interacting with Tat signal peptides. TatB may form an oligomeric binding site that transiently accommodates folded Tat precursor proteins before their translocation. The chain is Sec-independent protein translocase protein TatB from Mycobacterium avium (strain 104).